The primary structure comprises 224 residues: Oocyte zinc finger protein XlCOF6.1 (224 aa).

C2H2-type zinc fingers lie at residues 6-28 (FSCS…CRSH), 34-56 (FHCT…QRYH), 62-84 (FTCF…IRMH), 90-112 (FSCS…QKIH), 118-140 (FSCS…YRTH), 146-168 (FPCP…RRTH), 174-196 (FACS…RLGH), and 202-224 (FSCS…LKSH).

Belongs to the krueppel C2H2-type zinc-finger protein family.

Its subcellular location is the nucleus. Functionally, may be involved in transcriptional regulation. This chain is Oocyte zinc finger protein XlCOF6.1, found in Xenopus laevis (African clawed frog).